Consider the following 327-residue polypeptide: FERM domain-containing protein 6 (327 aa).

Residues 16–320 (RRVCIFLPND…NSHRLYMNLQ (305 aa)) form the FERM domain.

Its subcellular location is the cytoplasm. The protein resides in the cell membrane. The polypeptide is FERM domain-containing protein 6 (Frmd6) (Rattus norvegicus (Rat)).